A 157-amino-acid chain; its full sequence is Nicotinate dehydrogenase subunit A (157 aa).

In terms of domain architecture, 2Fe-2S ferredoxin-type spans 3–79 (TTISLQVNGQ…GRNITTLEGL (77 aa)). C41, C46, C49, and C61 together coordinate [2Fe-2S] cluster.

[2Fe-2S] cluster serves as cofactor.

The catalysed reaction is 2 Fe(III)-[cytochrome] + nicotinate + H2O = 2 Fe(II)-[cytochrome] + 6-hydroxynicotinate + 2 H(+). The protein operates within cofactor degradation; nicotinate degradation. In terms of biological role, subunit of the two-component enzyme NicAB that mediates nicotinate hydroxylation, the first step in the aerobic nicotinate degradation pathway. Mediates conversion of nicotinate into 6-hydroxynicotinate (6HNA). The polypeptide is Nicotinate dehydrogenase subunit A (nicA) (Pseudomonas putida (strain ATCC 47054 / DSM 6125 / CFBP 8728 / NCIMB 11950 / KT2440)).